The primary structure comprises 688 residues: Complement C1s-1 subcomponent (688 aa).

The N-terminal stretch at 1–15 (MWYLVLFSLLASFSA) is a signal peptide. The 115-residue stretch at 16–130 (EPTMHGEILS…TGFAAYYTAI (115 aa)) folds into the CUB 1 domain. Positions 60, 68, 113, 131, 132, and 134 each coordinate Ca(2+). A disulfide bridge connects residues C65 and C83. The EGF-like; calcium-binding domain maps to 131 to 172 (DVNECTDFTDVPCSHFCNNFIGGYFCSCPPEYFLHDDMRNCG). Cystine bridges form between C135/C147, C143/C156, and C158/C171. Residues N149, F150, and G153 each coordinate Ca(2+). N149 carries the (3R)-3-hydroxyasparagine modification. A glycan (N-linked (GlcNAc...) asparagine) is linked at N174. C175 and C202 are joined by a disulfide. Residues 175-290 (CSGDVFTALI…KGWKLRYHGD (116 aa)) form the CUB 2 domain. 5 residues coordinate Ca(2+): E226, D236, D275, G278, and Q279. C234 and C251 are oxidised to a cystine. Sushi domains are found at residues 292–356 (ISCP…KCQP) and 357–423 (VYCG…RCIP). Intrachain disulfides connect C294–C341, C321–C354, C359–C403, C386–C421, C425–C549, C595–C618, and C627–C659. The Peptidase S1 domain occupies 438–680 (IFGGQPAKIE…YVDWILKTMQ (243 aa)). Catalysis depends on charge relay system residues H475 and D529. S631 acts as the Charge relay system in catalysis.

The protein belongs to the peptidase S1 family. As to quaternary structure, core component of the complement C1 complex, a calcium-dependent complex composed of 1 molecule of the C1Q subcomplex, 2 molecules of C1R and 2 molecules of C1S. The C1Q subcomplex is composed 18 subunits: 3 chains of C1QA, C1QB, and C1QC trimerize to form 6 collagen-like triple helices connected to six globular ligand-recognition modules. Post-translationally, cleaved and activated by C1R to generate Complement C1s subcomponent heavy and light chains. The iron and 2-oxoglutarate dependent 3-hydroxylation of aspartate and asparagine is (R) stereospecific within EGF domains. Specifically expressed in male reproductive tissues.

It is found in the secreted. Its subcellular location is the cell surface. The enzyme catalyses Cleavage of Arg-|-Ala bond in complement component C4 to form C4a and C4b, and Lys(or Arg)-|-Lys bond in complement component C2 to form C2a and C2b: the 'classical' pathway C3 convertase.. Cleaved and activated by C1R. Immunoglobulin-binding promotes autoactivation of C1R, which results in the cleavage of the Arg-Ile bond in the catalytic domain. Inhibited by C1 inhibitor (SERPING1). In terms of biological role, component of the complement C1 complex, a multiprotein complex that initiates the classical pathway of the complement system, a cascade of proteins that leads to phagocytosis and breakdown of pathogens and signaling that strengthens the adaptive immune system. C1S is activated following association of the C1 complex with immunoglobulins (IgG or IgM) complexed with antigens to form antigen-antibody complexes on the surface of pathogens. C1S is cleaved and activated by C1R to generate C1s subcomponent heavy and light chains. C1s subcomponent light chain then cleaves and activates C2 and C4, the next components of the classical complement pathway. Serine protease component of the complement C1 complex, which catalyzes cleavage and activation of C2 and C4, the next components of the classical complement pathway. Also cleaves IGFBP5 and thereby inhibits the trophic effects of IGF1. This chain is Complement C1s-1 subcomponent, found in Mus musculus (Mouse).